The following is a 368-amino-acid chain: MSSSNEPPRKTDQPSSSSASASASPSLFLSLPLEIISMILARVPKRYYPILCSVSKNMRSLVRSPEIHKARSLLGKDYLYIGFIDENYRPVYDYWYTLRRIENSTTENLFESIEFPYPSEPNRFSMNAVGPKIFFISESCTPSSRLSIFDTRFGELRQGPCLLVKRGYNCVGLVGGKVYVIGGYQDDEIAAESFDLNTQTWEAAPIPDEKESHRWICKANVSFDRKVCALRSREGMTCYDTRDGSCQRSEMPNDQWSRVGLCVIDNVLFVYFSRFGLMWYDSKLMLWRVVYGFDLDNARSVGIGEYYGKLAFIWEKPSLNVSESKEIWCRMIGLLRSEVGIHGAAEPSQLVEIVPNGYRMCHCLSLSG.

Positions 1–23 (MSSSNEPPRKTDQPSSSSASASA) are disordered. Residues 14–23 (PSSSSASASA) show a composition bias toward low complexity. The region spanning 25–71 (PSLFLSLPLEIISMILARVPKRYYPILCSVSKNMRSLVRSPEIHKAR) is the F-box domain. A Kelch repeat occupies 177–221 (KVYVIGGYQDDEIAAESFDLNTQTWEAAPIPDEKESHRWICKANV).

In Arabidopsis thaliana (Mouse-ear cress), this protein is F-box/kelch-repeat protein At2g44700.